We begin with the raw amino-acid sequence, 397 residues long: Elongation factor Tu (397 aa).

The tr-type G domain occupies 10-206; the sequence is KPHVNIGTIG…AVDTAIPEPE (197 aa). The G1 stretch occupies residues 19–26; it reads GHIDHGKT. 19–26 lines the GTP pocket; it reads GHIDHGKT. T26 provides a ligand contact to Mg(2+). Positions 62–66 are G2; sequence GITIS. The interval 83-86 is G3; it reads DCPG. Residues 83–87 and 138–141 each bind GTP; these read DCPGH and NKAD. The G4 stretch occupies residues 138-141; the sequence is NKAD. A G5 region spans residues 176–178; that stretch reads SAL.

The protein belongs to the TRAFAC class translation factor GTPase superfamily. Classic translation factor GTPase family. EF-Tu/EF-1A subfamily. As to quaternary structure, monomer.

It is found in the cytoplasm. The catalysed reaction is GTP + H2O = GDP + phosphate + H(+). In terms of biological role, GTP hydrolase that promotes the GTP-dependent binding of aminoacyl-tRNA to the A-site of ribosomes during protein biosynthesis. The chain is Elongation factor Tu from Kineococcus radiotolerans (strain ATCC BAA-149 / DSM 14245 / SRS30216).